A 339-amino-acid chain; its full sequence is Caspase drICE (339 aa).

Positions 1-28 (MDATNNGESADQVGIRVGNPEQPNDHTD) are excised as a propeptide. Residues 1-45 (MDATNNGESADQVGIRVGNPEQPNDHTDALGSVGSGGAGSSGLVA) are disordered. Catalysis depends on residues His-169 and Cys-211. Positions 218–230 (GGVTMQRSQTETD) are excised as a propeptide.

This sequence belongs to the peptidase C14A family. In terms of assembly, heterotetramer that consists of two anti-parallel arranged heterodimers, each one formed by a 21 kDa (p21) and a 12 kDa (p12) subunit. Inactive pro-form can homodimerize. Dronc and Drice can form a stable complex. Interacts with Diap2 (via BIR3 domain) to form a stable complex. May interact with some isoforms of Dark.

Its activity is regulated as follows. Zymogen activated by proteolytic cleavage; cleaved by the initiator caspase Dronc upon apoptosis induction. Functionally, involved in the activation cascade of caspases responsible for apoptosis execution. Acts downstream of rpr. Cleaves baculovirus p35 and lamin DmO in vitro. This is Caspase drICE (Drice) from Drosophila melanogaster (Fruit fly).